Consider the following 206-residue polypeptide: Ribonuclease HII (206 aa).

Residues 14–206 (ALVCGIDEAG…FRLRQLGEKP (193 aa)) form the RNase H type-2 domain. A divalent metal cation-binding residues include aspartate 20, glutamate 21, and aspartate 117.

Belongs to the RNase HII family. Requires Mn(2+) as cofactor. Mg(2+) is required as a cofactor.

It localises to the cytoplasm. It catalyses the reaction Endonucleolytic cleavage to 5'-phosphomonoester.. Functionally, endonuclease that specifically degrades the RNA of RNA-DNA hybrids. This is Ribonuclease HII from Pelodictyon phaeoclathratiforme (strain DSM 5477 / BU-1).